Reading from the N-terminus, the 290-residue chain is Probable lipid hydrolase 463L (290 aa).

2 helical membrane passes run 26 to 46 (TLVLSGGAMRGVYLLGALNGL) and 53 to 73 (ISTFIGISSGSIICFLLSIGY). Positions 27 to 207 (LVLSGGAMRG…WNNFPIDIAI (181 aa)) constitute a PNPLA domain. The GXSXG motif lies at 58-62 (GISSG). Serine 60 functions as the Nucleophile in the catalytic mechanism. The active-site Proton acceptor is the aspartate 194. The DGA/G motif lies at 194-196 (DGG).

The protein resides in the membrane. In terms of biological role, probable lipid hydrolase. The chain is Probable lipid hydrolase 463L from Invertebrate iridescent virus 6 (IIV-6).